A 268-amino-acid polypeptide reads, in one-letter code: 4-hydroxy-tetrahydrodipicolinate reductase (268 aa).

Residue 8–13 participates in NAD(+) binding; sequence GAAGRM. Arginine 36 provides a ligand contact to NADP(+). Residues 99 to 101 and 123 to 126 contribute to the NAD(+) site; these read GTT and AANF. Histidine 156 serves as the catalytic Proton donor/acceptor. Histidine 157 contacts (S)-2,3,4,5-tetrahydrodipicolinate. Lysine 160 serves as the catalytic Proton donor. 166-167 is a (S)-2,3,4,5-tetrahydrodipicolinate binding site; the sequence is GT.

The protein belongs to the DapB family.

The protein localises to the cytoplasm. It carries out the reaction (S)-2,3,4,5-tetrahydrodipicolinate + NAD(+) + H2O = (2S,4S)-4-hydroxy-2,3,4,5-tetrahydrodipicolinate + NADH + H(+). The enzyme catalyses (S)-2,3,4,5-tetrahydrodipicolinate + NADP(+) + H2O = (2S,4S)-4-hydroxy-2,3,4,5-tetrahydrodipicolinate + NADPH + H(+). It participates in amino-acid biosynthesis; L-lysine biosynthesis via DAP pathway; (S)-tetrahydrodipicolinate from L-aspartate: step 4/4. In terms of biological role, catalyzes the conversion of 4-hydroxy-tetrahydrodipicolinate (HTPA) to tetrahydrodipicolinate. The chain is 4-hydroxy-tetrahydrodipicolinate reductase from Pseudomonas fluorescens (strain SBW25).